We begin with the raw amino-acid sequence, 394 residues long: Probable malate--CoA ligase subunit beta (394 aa).

One can recognise an ATP-grasp domain in the interval 9-244 (KELLARHGVH…KSQEDPRETF (236 aa)). Positions 46, 99, 102, and 107 each coordinate ATP. Residues N199 and D213 each contribute to the Mg(2+) site.

The protein belongs to the succinate/malate CoA ligase beta subunit family. Heterotetramer of two alpha and two beta subunits. Mg(2+) is required as a cofactor.

It carries out the reaction (S)-malate + ATP + CoA = (S)-malyl-CoA + ADP + phosphate. It functions in the pathway one-carbon metabolism; formaldehyde assimilation via serine pathway. The sequence is that of Probable malate--CoA ligase subunit beta (mtkA) from Mesorhizobium japonicum (strain LMG 29417 / CECT 9101 / MAFF 303099) (Mesorhizobium loti (strain MAFF 303099)).